A 1551-amino-acid polypeptide reads, in one-letter code: Pentafunctional AROM polypeptide (1551 aa).

Residues Met1–Lys379 are 3-dehydroquinate synthase. NAD(+) is bound by residues Asp42–Asn44, Glu80–Lys83, Gly111–Val113, and Asp116. 7-phospho-2-dehydro-3-deoxy-D-arabino-heptonate is bound at residue Arg127. Residue Thr136–Thr137 coordinates NAD(+). Residues Asp143 and Lys149 each coordinate 7-phospho-2-dehydro-3-deoxy-D-arabino-heptonate. Position 158 (Lys158) interacts with NAD(+). Asn159 contacts 7-phospho-2-dehydro-3-deoxy-D-arabino-heptonate. NAD(+)-binding positions include Tyr176–Ser179 and Asn187. Glu191 is a binding site for Zn(2+). 7-phospho-2-dehydro-3-deoxy-D-arabino-heptonate-binding positions include Glu191–Lys194 and Lys243. The Proton acceptor; for 3-dehydroquinate synthase activity role is filled by Glu253. 7-phospho-2-dehydro-3-deoxy-D-arabino-heptonate contacts are provided by residues Arg257–Asn261 and His264. His264 is a binding site for Zn(2+). The active-site Proton acceptor; for 3-dehydroquinate synthase activity is the His268. The 7-phospho-2-dehydro-3-deoxy-D-arabino-heptonate site is built by His280 and Lys351. His280 is a binding site for Zn(2+). The segment at Val392–Ile838 is EPSP synthase. A shikimate kinase region spans residues Asp858 to Ser1048. Position 865-872 (Gly865–Ser872) interacts with ATP. The interval Leu1049–Glu1258 is 3-dehydroquinase. The active-site Schiff-base intermediate with substrate; for 3-dehydroquinate dehydratase activity is the Lys1194. The shikimate dehydrogenase stretch occupies residues Ala1271–Glu1551.

It in the N-terminal section; belongs to the sugar phosphate cyclases superfamily. Dehydroquinate synthase family. The protein in the 2nd section; belongs to the EPSP synthase family. In the 3rd section; belongs to the shikimate kinase family. This sequence in the 4th section; belongs to the type-I 3-dehydroquinase family. It in the C-terminal section; belongs to the shikimate dehydrogenase family. Homodimer. Zn(2+) serves as cofactor.

The protein localises to the cytoplasm. It catalyses the reaction 7-phospho-2-dehydro-3-deoxy-D-arabino-heptonate = 3-dehydroquinate + phosphate. The enzyme catalyses 3-dehydroquinate = 3-dehydroshikimate + H2O. The catalysed reaction is shikimate + NADP(+) = 3-dehydroshikimate + NADPH + H(+). It carries out the reaction shikimate + ATP = 3-phosphoshikimate + ADP + H(+). It catalyses the reaction 3-phosphoshikimate + phosphoenolpyruvate = 5-O-(1-carboxyvinyl)-3-phosphoshikimate + phosphate. The protein operates within metabolic intermediate biosynthesis; chorismate biosynthesis; chorismate from D-erythrose 4-phosphate and phosphoenolpyruvate: step 2/7. Its pathway is metabolic intermediate biosynthesis; chorismate biosynthesis; chorismate from D-erythrose 4-phosphate and phosphoenolpyruvate: step 3/7. It participates in metabolic intermediate biosynthesis; chorismate biosynthesis; chorismate from D-erythrose 4-phosphate and phosphoenolpyruvate: step 4/7. It functions in the pathway metabolic intermediate biosynthesis; chorismate biosynthesis; chorismate from D-erythrose 4-phosphate and phosphoenolpyruvate: step 5/7. The protein operates within metabolic intermediate biosynthesis; chorismate biosynthesis; chorismate from D-erythrose 4-phosphate and phosphoenolpyruvate: step 6/7. The AROM polypeptide catalyzes 5 consecutive enzymatic reactions in prechorismate polyaromatic amino acid biosynthesis. The chain is Pentafunctional AROM polypeptide from Candida tropicalis (strain ATCC MYA-3404 / T1) (Yeast).